A 121-amino-acid chain; its full sequence is Apoptin (121 aa).

Disordered stretches follow at residues 1–28 and 57–121; these read MNAL…LETP and LRSA…CIRL. Residues 58–70 show a composition bias toward polar residues; the sequence is RSATADNSESTGF. Residues 88–102 show a composition bias toward basic and acidic residues; it reads RSCDPSEYRVSELKE.

It belongs to the gyrovirus apoptin family.

It is found in the host nucleus. May act as transcriptional regulator. Induces apoptosis in infected cells. Element of infectious replication cycle. The polypeptide is Apoptin (VP3) (Gallus gallus (Chicken)).